The sequence spans 338 residues: RNA 3'-terminal phosphate cyclase (338 aa).

ATP is bound by residues glutamine 103 and 283–287 (YLADQ). Histidine 308 acts as the Tele-AMP-histidine intermediate in catalysis.

The protein belongs to the RNA 3'-terminal cyclase family. Type 1 subfamily.

The protein resides in the cytoplasm. The catalysed reaction is a 3'-end 3'-phospho-ribonucleotide-RNA + ATP = a 3'-end 2',3'-cyclophospho-ribonucleotide-RNA + AMP + diphosphate. Catalyzes the conversion of 3'-phosphate to a 2',3'-cyclic phosphodiester at the end of RNA. The mechanism of action of the enzyme occurs in 3 steps: (A) adenylation of the enzyme by ATP; (B) transfer of adenylate to an RNA-N3'P to produce RNA-N3'PP5'A; (C) and attack of the adjacent 2'-hydroxyl on the 3'-phosphorus in the diester linkage to produce the cyclic end product. The biological role of this enzyme is unknown but it is likely to function in some aspects of cellular RNA processing. This Escherichia coli O139:H28 (strain E24377A / ETEC) protein is RNA 3'-terminal phosphate cyclase.